Consider the following 741-residue polypeptide: Protein ACCUMULATION AND REPLICATION OF CHLOROPLASTS 3, chloroplastic (741 aa).

A chloroplast-targeting transit peptide spans 1–41 (MPISMELPVFSTLRVPLFSRLALLPTFGVPFSSLGATTRLN). 2 disordered regions span residues 444 to 465 (ENGD…SRLD) and 539 to 558 (DSRE…SSDT). Positions 451 to 465 (YPLKEGEPSRNSRLD) are enriched in basic and acidic residues. Positions 546–558 (FNPNGSTKDSSDT) are enriched in polar residues. 3 MORN repeats span residues 612 to 628 (QGGL…GDGS), 630 to 652 (YDGM…NGDV), and 653 to 675 (FQGT…KGDR).

In terms of assembly, self-interacts. Interacts with FTSZ, CDP1/PARC6 (via N-terminus), MIND1 and MINE1. Part of a complex made of ARC3, ARC6, FTSZ1 and FTSZ2. Recruited to the middle of the plastid by CDP1/PARC6 where subsequent complex made of CDP1/PARC6, ARC3 and FtsZ proteins can form; this complex enhances the dynamics of Z rings during chloroplast division. Binding to FTSZ2-1 is enabled by ARC6.

Its subcellular location is the plastid. It localises to the chloroplast outer membrane. The protein resides in the chloroplast stroma. Together with MIND1 and MCD1, regulates FtsZ ring positioning in chloroplasts in an ARC6-dependent manner. Z-ring accessory protein involved in the initiation of plastid division and division site placement (might functionally replace bacterial MinC). Acts as a disassembly factor that accelerates fragmentation and depolymerization of existing FtsZ2 filaments by enhancing FTSZ2 GTPase activity, thus leading to the conversion of FTSZ2 bound GTP into GDP, a process which triggers FtsZ2 filaments destabilization. Prevents misplaced Z-ring formation at chloroplast stroma nondivision sites. May control the rate of chloroplast expansion. Seems to influence stromule (stroma-filled tubular extensions of the plastid envelope membrane) length and frequency. The chain is Protein ACCUMULATION AND REPLICATION OF CHLOROPLASTS 3, chloroplastic from Arabidopsis thaliana (Mouse-ear cress).